Reading from the N-terminus, the 208-residue chain is Large ribosomal subunit protein uL3 (208 aa).

A disordered region spans residues 116 to 148 (GFQGVIKRHGQSRGPMAHGSRYHRRPGSMGPVA).

This sequence belongs to the universal ribosomal protein uL3 family. As to quaternary structure, part of the 50S ribosomal subunit. Forms a cluster with proteins L14 and L19.

Its function is as follows. One of the primary rRNA binding proteins, it binds directly near the 3'-end of the 23S rRNA, where it nucleates assembly of the 50S subunit. This chain is Large ribosomal subunit protein uL3, found in Streptococcus pyogenes serotype M6 (strain ATCC BAA-946 / MGAS10394).